Reading from the N-terminus, the 805-residue chain is Angiotensin-converting enzyme 2 (805 aa).

Positions 1–17 (MSSSCWLLLSLVAVATA) are cleaved as a signal peptide. At 18 to 740 (QSLIEEKAES…LKPPYEPPVT (723 aa)) the chain is on the extracellular side. One can recognise a Peptidase M2 domain in the interval 19–607 (SLIEEKAESF…QNRNSTVGWS (589 aa)). 3 N-linked (GlcNAc...) asparagine glycosylation sites follow: Asn53, Asn82, and Asn90. Cys133 and Cys141 are oxidised to a cystine. A chloride-binding site is contributed by Arg169. Residue Arg273 participates in substrate binding. A glycan (N-linked (GlcNAc...) asparagine) is linked at Asn299. A disulfide bridge links Cys344 with Cys361. Residue 345 to 346 (HP) coordinates substrate. His374 contributes to the Zn(2+) binding site. The Proton acceptor role is filled by Glu375. Zn(2+) is bound by residues His378 and Glu402. Asn432 carries an N-linked (GlcNAc...) asparagine glycan. Positions 477 and 481 each coordinate chloride. Residue His505 is the Proton donor of the active site. Tyr515 contacts substrate. A disulfide bridge connects residues Cys530 and Cys542. Asn546 and Asn601 each carry an N-linked (GlcNAc...) asparagine glycan. The Collectrin-like domain occupies 614–805 (ADQSIKVRIS…QNSDDAQTSF (192 aa)). The segment at 652–659 (REYFSREK) is essential for cleavage by ADAM17. 2 N-linked (GlcNAc...) asparagine glycosylation sites follow: Asn660 and Asn690. Positions 697–716 (RSEVEEAIRMSRGRINDIFG) are essential for cleavage by TMPRSS11D and TMPRSS2. A helical transmembrane segment spans residues 741-761 (IWLIIFGVVMGTVVVGIVILI). At 762 to 805 (VTGIKGRKKKNETKREENPYDSMDIGKGESNAGFQNSDDAQTSF) the chain is on the cytoplasmic side. The disordered stretch occupies residues 771–805 (KNETKREENPYDSMDIGKGESNAGFQNSDDAQTSF). Positions 778–786 (ENPYDSMDI) match the LIR motif. Position 781 is a phosphotyrosine (Tyr781). Residues 781–784 (YDSM) carry the Endocytic sorting signal motif. The SH2-binding motif lies at 781–785 (YDSMD). Ser783 is modified (phosphoserine). Lys788 participates in a covalent cross-link: Glycyl lysine isopeptide (Lys-Gly) (interchain with G-Cter in ubiquitin). A PTB motif is present at residues 792–795 (NAGF). The span at 793–805 (AGFQNSDDAQTSF) shows a compositional bias: polar residues. A PDZ-binding motif is present at residues 803–805 (TSF).

It belongs to the peptidase M2 family. In terms of assembly, homodimer. Interacts with the catalytically active form of TMPRSS2. Interacts with SLC6A19; this interaction is essential for expression and function of SLC6A19 in intestine. Interacts with ITGA5:ITGB1. Probably interacts (via endocytic sorting signal motif) with AP2M1; the interaction is inhibited by phosphorylation of Tyr-781. Interacts (via PDZ-binding motif) with NHERF1 (via PDZ domains); the interaction may enhance ACE2 membrane residence. The cofactor is Zn(2+). Chloride serves as cofactor. Glycosylated. In terms of processing, proteolytic cleavage by ADAM17 generates a secreted form. Also cleaved by serine proteases: TMPRSS2, TMPRSS11D and HPN/TMPRSS1. Post-translationally, phosphorylated. Phosphorylation at Tyr-781 probably inhibits interaction with AP2M1 and enables interactions with proteins containing SH2 domains. Ubiquitinated. Ubiquitinated on Lys-788 via 'Lys-48'-linked ubiquitin. 'Lys-48'-linked deubiquitinated by USP50 on the Lys-788; leading to its stabilization. Expressed in heart, kidney and forebrain. In testis, expression is restricted to Leydig cells. In heart, expressed in endothelial cells from small and large arteries, arterial smooth muscle cells, and myocytes (at protein level). Ubiquitously expressed, with highest levels in ileum, bladder and lung.

Its subcellular location is the secreted. The protein localises to the cell membrane. The protein resides in the cytoplasm. It is found in the cell projection. It localises to the cilium. Its subcellular location is the apical cell membrane. It catalyses the reaction angiotensin II + H2O = angiotensin-(1-7) + L-phenylalanine. It carries out the reaction angiotensin I + H2O = angiotensin-(1-9) + L-leucine. The enzyme catalyses bradykinin(1-8) + H2O = bradykinin(1-7) + L-phenylalanine. The catalysed reaction is neurotensin + H2O = neurotensin-(1-12) + L-leucine. It catalyses the reaction kinetensin + H2O = kinetensin-(1-8) + L-leucine. It carries out the reaction dynorphin A-(1-13) + H2O = dynorphin A-(1-12) + L-lysine. The enzyme catalyses apelin-13 + H2O = apelin-12 + L-phenylalanine. The catalysed reaction is [Pyr1]apelin-13 + H2O = [Pyr1]apelin-12 + L-phenylalanine. It catalyses the reaction apelin-17 + H2O = apelin-16 + L-phenylalanine. Activated by chloride and fluoride, but not bromide. Inhibited by MLN-4760, cFP_Leu, and EDTA, but not by the ACE inhibitors linosipril, captopril, enalaprilat. Its function is as follows. Essential counter-regulatory carboxypeptidase of the renin-angiotensin hormone system that is a critical regulator of blood volume, systemic vascular resistance, and thus cardiovascular homeostasis. Converts angiotensin I to angiotensin 1-9, a nine-amino acid peptide with anti-hypertrophic effects in cardiomyocytes, and angiotensin II to angiotensin 1-7, which then acts as a beneficial vasodilator and anti-proliferation agent, counterbalancing the actions of the vasoconstrictor angiotensin II. Also removes the C-terminal residue from three other vasoactive peptides, neurotensin, kinetensin, and des-Arg bradykinin, but is not active on bradykinin. Also cleaves other biological peptides, such as apelins, casomorphins and dynorphin A. Plays an important role in amino acid transport by acting as binding partner of amino acid transporter SLC6A19 in intestine, regulating trafficking, expression on the cell surface, and its catalytic activity. In Rattus norvegicus (Rat), this protein is Angiotensin-converting enzyme 2 (Ace2).